Here is a 420-residue protein sequence, read N- to C-terminus: Sulfate adenylyltransferase (420 aa).

This sequence belongs to the sulfate adenylyltransferase family.

It catalyses the reaction sulfate + ATP + H(+) = adenosine 5'-phosphosulfate + diphosphate. It functions in the pathway sulfur metabolism; hydrogen sulfide biosynthesis; sulfite from sulfate: step 1/3. The chain is Sulfate adenylyltransferase from Desulforudis audaxviator (strain MP104C).